The following is a 222-amino-acid chain: Sortase A (222 aa).

Residues 1–7 lie on the Cytoplasmic side of the membrane; that stretch reads MLKKTIA. Residues 8 to 28 traverse the membrane as a helical segment; the sequence is IIILIIGLLLIFSPFIKNGIV. The Extracellular segment spans residues 29–222; the sequence is KYMSGHETIE…ELENKYFPSK (194 aa). Catalysis depends on histidine 127, which acts as the Proton donor/acceptor. Residue cysteine 188 is the Acyl-thioester intermediate of the active site.

It belongs to the bacterial sortase family. Class A subfamily.

The protein localises to the cell membrane. Activity is enhanced by Zn(2+) and strongly enhanced by Ca(2+). Inhibited by chalcone, a precursor of several flavonoids, which blocks the SrtA active site. In terms of biological role, transpeptidase that anchors surface proteins to the cell wall. Recognizes and modifies its substrate by proteolytic cleavage of a C-terminal sorting signal. Following cleavage, a covalent intermediate is formed via a thioester bond between the sortase and its substrate, which is then transferred and covalently attached to the cell wall. This sortase recognizes a Leu-Pro-x-Thr-Gly (LPXTG) motif, which is cleaved by the sortase between the threonine and glycine residues. Involved in pathogenesis. May regulate the rate of synthesis and/or the stability of a subset of LPXTG proteins. Not involved in cell wall-anchoring of Hbp2 (SvpA) or Hbp1. The sequence is that of Sortase A from Listeria monocytogenes serovar 1/2a (strain ATCC BAA-679 / EGD-e).